Here is a 229-residue protein sequence, read N- to C-terminus: ATP-dependent dethiobiotin synthetase BioD (229 aa).

12 to 17 (GVGKTV) provides a ligand contact to ATP. T16 lines the Mg(2+) pocket. K37 is an active-site residue. T41 contacts substrate. ATP contacts are provided by residues D53, 112 to 115 (EGAG), and 201 to 203 (PAG). Mg(2+)-binding residues include D53 and E112.

This sequence belongs to the dethiobiotin synthetase family. Homodimer. Mg(2+) serves as cofactor.

The protein resides in the cytoplasm. The catalysed reaction is (7R,8S)-7,8-diammoniononanoate + CO2 + ATP = (4R,5S)-dethiobiotin + ADP + phosphate + 3 H(+). It functions in the pathway cofactor biosynthesis; biotin biosynthesis; biotin from 7,8-diaminononanoate: step 1/2. Functionally, catalyzes a mechanistically unusual reaction, the ATP-dependent insertion of CO2 between the N7 and N8 nitrogen atoms of 7,8-diaminopelargonic acid (DAPA, also called 7,8-diammoniononanoate) to form a ureido ring. In Mycobacterium sp. (strain KMS), this protein is ATP-dependent dethiobiotin synthetase BioD.